The following is a 318-amino-acid chain: Zinc chaperone YjiA (318 aa).

11-19 (GFLGAGKTT) lines the GTP pocket. Zn(2+)-binding residues include Glu-37, Glu-42, Cys-66, Glu-74, and His-114. A CXCC motif motif is present at residues 64–67 (CICC). Asp-161 contributes to the GTP binding site. Residues Glu-167, His-170, and His-187 each coordinate Zn(2+). A CobW C-terminal domain is found at 224–315 (ISSIVVELDY…EEEIRAAFAG (92 aa)).

This sequence belongs to the SIMIBI class G3E GTPase family. ZNG1 subfamily. In terms of assembly, monomer in the apo form. Metal binding induces oligomerization. Forms homodimers and higher oligomers.

The catalysed reaction is GTP + H2O = GDP + phosphate + H(+). Its activity is regulated as follows. GTPase activity is inhibited by metal binding. Activity is decreased in the presence of Co(II) or Ni(II), and is completely inhibited in the presence of Zn(II). Zinc chaperone that directly transfers zinc cofactor to target proteins, thereby activating them. Zinc is transferred from the CXCC motif in the GTPase domain to the zinc binding site in target proteins in a process requiring GTP hydrolysis. The polypeptide is Zinc chaperone YjiA (yjiA) (Escherichia coli (strain K12)).